A 4007-amino-acid chain; its full sequence is PKS-NRPS hybrid synthetase psoA (4007 aa).

In terms of domain architecture, Ketosynthase family 3 (KS3) spans K8 to S444. Catalysis depends on for beta-ketoacyl synthase activity residues C182, H321, and H364. The segment at V575–L897 is malonyl-CoA:ACP transacylase (MAT) domain. The interval H969–E1105 is N-terminal hotdog fold. A dehydratase (DH) domain region spans residues H969–M1147. One can recognise a PKS/mFAS DH domain in the interval H969–K1276. H1001 (proton acceptor; for dehydratase activity) is an active-site residue. The tract at residues D1120–K1276 is C-terminal hotdog fold. D1179 functions as the Proton donor; for dehydratase activity in the catalytic mechanism. The tract at residues T2131–V2305 is ketoreductase (KR) domain. The Carrier 1 domain occupies E2418–L2495. The residue at position 2455 (S2455) is an O-(pantetheine 4'-phosphoryl)serine. The segment at P2513–P2550 is disordered. Over residues R2518 to D2531 the composition is skewed to basic and acidic residues. The interval Q2589–V2885 is condensation (C) domain. Residues T3076–Q3478 form an adenylation (A) domain region. One can recognise a Carrier 2 domain in the interval T3576–S3652. Position 3612 is an O-(pantetheine 4'-phosphoryl)serine (S3612). The reductase (R) domain stretch occupies residues L3696–I3920.

The protein in the C-terminal section; belongs to the NRP synthetase family.

It participates in secondary metabolite biosynthesis. Functionally, PKS-NRPS hybrid synthetase; part of the gene cluster that mediates the biosynthesis of pseurotin A, a competitive inhibitor of chitin synthase and an inducer of nerve-cell proliferation. The PKS-NRPS hybrid synthetase psoA is responsible for the biosynthesis of azaspirene, one of the first intermediates having the 1-oxa-7-azaspiro[4,4]-non-2-ene-4,6-dione core of pseurotin, via condensation of one acetyl-CoA, 4 malonyl-CoA, and a L-phenylalanine molecule. The dual-functional monooxygenase/methyltransferase psoF seems to be involved in the addition of the C3 methyl group onto the pseurotin scaffold. Azaspirene is then converted to synerazol through 4 steps including oxidation of C17 by the cytochrome P450 monooxygenase psoD, O-methylation of the hydroxy group of C8 by the methyltransferase psoC, and the trans-to-cis isomerization of the C13 olefin by the glutathione S-transferase psoE. The fourth step of synerazol production is performed by the dual-functional monooxygenase/methyltransferase psoF which seems to catalyze the epoxidation of the intermediate deepoxy-synerazol. Synerazol can be attacked by a water molecule nonenzymatically at two different positions to yield two diol products, pseurotin A and pseurotin D. The sequence is that of PKS-NRPS hybrid synthetase psoA from Aspergillus fumigatus (strain ATCC MYA-4609 / CBS 101355 / FGSC A1100 / Af293) (Neosartorya fumigata).